A 232-amino-acid polypeptide reads, in one-letter code: MKIGIIGAMEEEVTLLRDKIENRQTITLGGCEIYTGQLNGTEIALLKSGIGKVAAALGATLLLERCKPDVIINTGSAGGLAPTLTVGDIVVSDEARYHDADVTAFGYEFGQLPGCPAGFKADDALIAAAESCIAKLNLNAVRGLIVSGDAFINGSVGLAKIRHNFPQAIAVEMEATAIAHVCHNFNVPFVVVRAISDVADQQSHLSFDEFLAVAAKQSSLMVETLVQKLAHG.

The active-site Proton acceptor is the Glu12. Residues Gly78, Ile152, and 173–174 (ME) contribute to the substrate site. Asp197 (proton donor) is an active-site residue.

The protein belongs to the PNP/UDP phosphorylase family. MtnN subfamily. Homodimer.

It carries out the reaction S-adenosyl-L-homocysteine + H2O = S-(5-deoxy-D-ribos-5-yl)-L-homocysteine + adenine. It catalyses the reaction S-methyl-5'-thioadenosine + H2O = 5-(methylsulfanyl)-D-ribose + adenine. The catalysed reaction is 5'-deoxyadenosine + H2O = 5-deoxy-D-ribose + adenine. It functions in the pathway amino-acid biosynthesis; L-methionine biosynthesis via salvage pathway; S-methyl-5-thio-alpha-D-ribose 1-phosphate from S-methyl-5'-thioadenosine (hydrolase route): step 1/2. Catalyzes the irreversible cleavage of the glycosidic bond in both 5'-methylthioadenosine (MTA) and S-adenosylhomocysteine (SAH/AdoHcy) to adenine and the corresponding thioribose, 5'-methylthioribose and S-ribosylhomocysteine, respectively. Also cleaves 5'-deoxyadenosine, a toxic by-product of radical S-adenosylmethionine (SAM) enzymes, into 5-deoxyribose and adenine. Thus, is required for in vivo function of the radical SAM enzymes biotin synthase and lipoic acid synthase, that are inhibited by 5'-deoxyadenosine accumulation. The protein is 5'-methylthioadenosine/S-adenosylhomocysteine nucleosidase of Citrobacter koseri (strain ATCC BAA-895 / CDC 4225-83 / SGSC4696).